Here is a 335-residue protein sequence, read N- to C-terminus: Glyceraldehyde-3-phosphate dehydrogenase (335 aa).

NAD(+) contacts are provided by residues 12–13 (RI), Asp34, Arg78, and Ser120. D-glyceraldehyde 3-phosphate-binding positions include 151-153 (SCT) and Thr182. The Nucleophile role is filled by Cys152. An NAD(+)-binding site is contributed by Asn183. Residues Arg197, 210–211 (TG), and Arg233 each bind D-glyceraldehyde 3-phosphate. Asn315 contacts NAD(+).

The protein belongs to the glyceraldehyde-3-phosphate dehydrogenase family. As to quaternary structure, homotetramer.

The protein resides in the cytoplasm. The enzyme catalyses D-glyceraldehyde 3-phosphate + phosphate + NAD(+) = (2R)-3-phospho-glyceroyl phosphate + NADH + H(+). It functions in the pathway carbohydrate degradation; glycolysis; pyruvate from D-glyceraldehyde 3-phosphate: step 1/5. Functionally, catalyzes the oxidative phosphorylation of glyceraldehyde 3-phosphate (G3P) to 1,3-bisphosphoglycerate (BPG) using the cofactor NAD. The first reaction step involves the formation of a hemiacetal intermediate between G3P and a cysteine residue, and this hemiacetal intermediate is then oxidized to a thioester, with concomitant reduction of NAD to NADH. The reduced NADH is then exchanged with the second NAD, and the thioester is attacked by a nucleophilic inorganic phosphate to produce BPG. The chain is Glyceraldehyde-3-phosphate dehydrogenase (gap) from Priestia megaterium (strain DSM 319 / IMG 1521) (Bacillus megaterium).